The sequence spans 348 residues: Dihydroorotase (348 aa).

2 residues coordinate Zn(2+): His-17 and His-19. Substrate is bound by residues 19 to 21 (HLR) and Asn-45. 3 residues coordinate Zn(2+): Lys-103, His-140, and His-178. Position 103 is an N6-carboxylysine (Lys-103). A substrate-binding site is contributed by His-140. Residue Leu-223 participates in substrate binding. Residue Asp-251 coordinates Zn(2+). Asp-251 is an active-site residue. Substrate contacts are provided by His-255 and Ala-267.

It belongs to the metallo-dependent hydrolases superfamily. DHOase family. Class II DHOase subfamily. As to quaternary structure, homodimer. Requires Zn(2+) as cofactor.

The catalysed reaction is (S)-dihydroorotate + H2O = N-carbamoyl-L-aspartate + H(+). It functions in the pathway pyrimidine metabolism; UMP biosynthesis via de novo pathway; (S)-dihydroorotate from bicarbonate: step 3/3. In terms of biological role, catalyzes the reversible cyclization of carbamoyl aspartate to dihydroorotate. This Shigella boydii serotype 18 (strain CDC 3083-94 / BS512) protein is Dihydroorotase.